The primary structure comprises 615 residues: Lipoprotein LpqB (615 aa).

An N-terminal signal peptide occupies residues 1–29 (MGADRGRGGRRRPARVVAYAVGGVVLLAG). Residue C30 is the site of N-palmitoyl cysteine attachment. C30 carries S-diacylglycerol cysteine lipidation. Residues 100-123 (PDESATVLAGGPGTESDHSGNRED) are disordered. Residues 114–123 (ESDHSGNRED) are compositionally biased toward basic and acidic residues.

It belongs to the LpqB lipoprotein family.

The protein localises to the cell membrane. This chain is Lipoprotein LpqB, found in Streptomyces coelicolor (strain ATCC BAA-471 / A3(2) / M145).